The sequence spans 256 residues: Diaminopimelate epimerase (256 aa).

Residues Asn11 and Asn63 each contribute to the substrate site. Cys72 functions as the Proton donor in the catalytic mechanism. Residues 73–74 (GN), Asn169, and 187–188 (ER) each bind substrate. Cys197 acts as the Proton acceptor in catalysis. 198 to 199 (GT) is a substrate binding site.

Belongs to the diaminopimelate epimerase family. In terms of assembly, homodimer.

It localises to the cytoplasm. It carries out the reaction (2S,6S)-2,6-diaminopimelate = meso-2,6-diaminopimelate. It functions in the pathway amino-acid biosynthesis; L-lysine biosynthesis via DAP pathway; DL-2,6-diaminopimelate from LL-2,6-diaminopimelate: step 1/1. In terms of biological role, catalyzes the stereoinversion of LL-2,6-diaminopimelate (L,L-DAP) to meso-diaminopimelate (meso-DAP), a precursor of L-lysine and an essential component of the bacterial peptidoglycan. The polypeptide is Diaminopimelate epimerase (Flavobacterium psychrophilum (strain ATCC 49511 / DSM 21280 / CIP 103535 / JIP02/86)).